A 240-amino-acid chain; its full sequence is 3-dehydroquinate dehydratase (240 aa).

3-dehydroquinate contacts are provided by residues S15, 42–44 (EWR), and R73. H132 functions as the Proton donor/acceptor in the catalytic mechanism. Residue K160 is the Schiff-base intermediate with substrate of the active site. 3-dehydroquinate contacts are provided by R202, S221, and Q225.

This sequence belongs to the type-I 3-dehydroquinase family. Homodimer.

The catalysed reaction is 3-dehydroquinate = 3-dehydroshikimate + H2O. The protein operates within metabolic intermediate biosynthesis; chorismate biosynthesis; chorismate from D-erythrose 4-phosphate and phosphoenolpyruvate: step 3/7. Involved in the third step of the chorismate pathway, which leads to the biosynthesis of aromatic amino acids. Catalyzes the cis-dehydration of 3-dehydroquinate (DHQ) and introduces the first double bond of the aromatic ring to yield 3-dehydroshikimate. This chain is 3-dehydroquinate dehydratase, found in Latilactobacillus sakei subsp. sakei (strain 23K) (Lactobacillus sakei subsp. sakei).